We begin with the raw amino-acid sequence, 311 residues long: ATP synthase gamma chain (311 aa).

Residues Cys-67 and Cys-138 are joined by a disulfide bond.

It belongs to the ATPase gamma chain family. In terms of assembly, F-type ATPases have 2 components, CF(1) - the catalytic core - and CF(0) - the membrane proton channel. CF(1) has five subunits: alpha(3), beta(3), gamma(1), delta(1), epsilon(1). CF(0) has three main subunits: a, b and c.

It localises to the cellular thylakoid membrane. Thiol-modulation by raising the activation threshold of the enzyme upon oxidation of the cysteines, thereby preventing wasteful ATP-hydrolysis. Produces ATP from ADP in the presence of a proton gradient across the membrane. The gamma chain is believed to be important in regulating ATPase activity and the flow of protons through the CF(0) complex. The polypeptide is ATP synthase gamma chain (atpG) (Arthrospira platensis (Spirulina platensis)).